A 319-amino-acid chain; its full sequence is MSEECIENPERIKIGTDLINIRNKMNLKELIHPNEDENSTLLILNQKIDIPRPLFYKIWKLHDLKVCADGAANRLYDYLDDDETLRIKYLPNYIIGDLDSLSEKVYKYYRKNKVTIIKQTTQYSTDFTKCVNLISLHFNSPEFRSLISNKDNLQSNHGIELEKGIHTLYNTMTESLVFSKVTPISLLALGGIGGRFDQTVHSITQLYTLSENASYFKLCYMTPTDLIFLIKKNGTLIEYDPQFRNTCIGNCGLLPIGEATLVKETRGLKWDVKNWPTSVVTGRVSSSNRFVGDNCCFIDTKDDIILNVEIFVDKLIDFL.

An N-acetylserine modification is found at Ser2.

Belongs to the thiamine pyrophosphokinase family. In terms of assembly, homodimer.

It carries out the reaction thiamine + ATP = thiamine diphosphate + AMP + H(+). The protein operates within cofactor biosynthesis; thiamine diphosphate biosynthesis; thiamine diphosphate from thiamine: step 1/1. Its function is as follows. Essential protein, it is the only enzyme in yeast capable of synthesizing thiamine pyrophosphate (TPP). The sequence is that of Thiamine pyrophosphokinase from Saccharomyces cerevisiae (strain ATCC 204508 / S288c) (Baker's yeast).